The chain runs to 239 residues: Increased recombination centers protein 22-2 (239 aa).

Positions 1-19 (MKLSTIFTAFAATIATVAG) are cleaved as a signal peptide. The Lumenal segment spans residues 20–161 (YETTGSKQTV…AAVSFFDPRL (142 aa)). The helical transmembrane segment at 162 to 182 (IFLELVLLITFAGLIYVGYEI) threads the bilayer. Residues 183–239 (WGKQYFKGVAPVKAKKVSAAKASSPVATGPSTTSATGYDTNWIPESHLKQKKTKKVN) lie on the Cytoplasmic side of the membrane. Residues 202 to 222 (AKASSPVATGPSTTSATGYDT) are disordered. Over residues 211 to 221 (GPSTTSATGYD) the composition is skewed to polar residues.

It belongs to the IRC22 family.

Its subcellular location is the endoplasmic reticulum membrane. In terms of biological role, is probably involved in a pathway contributing to genomic integrity. The sequence is that of Increased recombination centers protein 22-2 (IRC22-2) from Candida albicans (strain SC5314 / ATCC MYA-2876) (Yeast).